Consider the following 430-residue polypeptide: tRNA(Ile)-lysidine synthase (430 aa).

Position 27–32 (Ser-27–Ser-32) interacts with ATP.

It belongs to the tRNA(Ile)-lysidine synthase family.

The protein localises to the cytoplasm. The catalysed reaction is cytidine(34) in tRNA(Ile2) + L-lysine + ATP = lysidine(34) in tRNA(Ile2) + AMP + diphosphate + H(+). Its function is as follows. Ligates lysine onto the cytidine present at position 34 of the AUA codon-specific tRNA(Ile) that contains the anticodon CAU, in an ATP-dependent manner. Cytidine is converted to lysidine, thus changing the amino acid specificity of the tRNA from methionine to isoleucine. The chain is tRNA(Ile)-lysidine synthase from Rickettsia prowazekii (strain Madrid E).